The primary structure comprises 1755 residues: MESQQLSQHSHISHGSACASVTSKEVHTNQDPLDVSASKIQEYDKASTKANSQQTTTPASSAVPENPHHASPQPASVPPPQNGPYPQQCMMTQNQANPSGWSFYGHPSMIPYTPYQMSPMYFPPGPQSQFPQYPSSVGTPLSTPSPESGNTFTDSSSADSDMTSTKKYVRPPPMLTSPNDFPNWVKTYIKFLQNSNLGGIIPTVNGKPVRQITDDELTFLYNTFQIFAPSQFLPTWVKDILSVDYTDIMKILSKSIEKMQSDTQEANDIVTLANLQYNGSTPADAFETKVTNIIDRLNNNGIHINNKVACQLIMRGLSGEYKFLRYTRHRHLNMTVAELFLDIHAIYEEQQGSRNSKPNYRRNPSDEKNDSRSYTNTTKPKVIARNPQKTNNSKSKTARAHNVSTSNNSPSTDNDSISKSTTEPIQLNNKHDLHLGQELTESTVNHTNHSDDELPGHLLLDSGASRTLIRSAHHIHSASSNPGINVVDAQKRNIPINAIGDLQFHFQDNTKTSIKVLHTPNIAYDLLSLNELAAVDITACFTKNVLERSDGTVLAPIVKYGDFYWVSKKYLLPSNISVPTINNVHTSESTRKYPYPFIHRMLAHANAQTIRYSLKNNTITYFNESDVDWSSAIDYQCPDCLIGKSTKHRHIKGSRLKYQNSYEPFQYLHTDIFGPVHNLPNSAPSYFISFTDETTKFRWVYPLHDRREDSILDVFTTILAFIKNQFQASVLVIQMDRGSEYTNRTLHKFLEKNGITPCYTTTADSRAHGVAERLNRTLLDDCRTQLQCSGLPNHLWFSAIEFSTIVRNSLASPKSKKSARQHAGLAGLDISTLLPFGQPVIVNDHNPNSKIHPRGIPGYALHPSRNSYGYIIYLPSLKKTVDTTNYVILQGKESRLDQFNYDALTFDEDLNRLTASYHSFIASNEIQESNDLNIESDHDFQSDIELHPEQPRNVLSKAVSPTDSTPPSTHTEDSKRVSKTNIRAPREVDPNISESNILPSKKRSSTPQISNIESTGSGGMHKLNVPLLAPMSQSNTHESSHASKSKDFRHSDSYSENETNHTNVPISSTGGTNNKTVPQISDQETEKRIIHRSPSIDASPPENNSSHNIVPIKTPTTVSEQNTEESIIADLPLPDLPPESPTEFPDPFKELPPINSHQTNSSLGGIGDSNAYTTINSKKRSLEDNETEIKVSRDTWNTKNMRSLEPPRSKKRIHLIAAVKAVKSIKPIRTTLRYDEAITYNKDIKEKEKYIEAYHKEVNQLLKMNTWDTDKYYDRKEIDPKRVINSMFIFNRKRDGTHKARFVARGDIQHPDTYDSGMQSNTVHHYALMTSLSLALDNNYYITQLDISSAYLYADIKEELYIRPPPHLGMNDKLIRLKKSLYGLKQSGANWYETIKSYLIKQCGMEEVRGWSCVFKNSQVTICLFVDDMILFSKDLNANKKIITTLKKQYDTKIINLGESDNEIQYDILGLEIKYQRGKYMKLGMENSLTEKIPKLNVPLNPKGRKLSAPGQPGLYIDQDELEIDEDEYKEKVHEMQKLIGLASYVGYKFRFDLLYYINTLAQHILFPSRQVLDMTYELIQFMWDTRDKQLIWHKNKPTEPDNKLVAISDASYGNQPYYKSQIGNIFLLNGKVIGGKSTKASLTCTSTTEAEIHAVSEAIPLLNNLSHLVQELNKKPIIKGLLTDSRSTISIIKSTNEEKFRNRFFGTKAMRLRDEVSGNNLYVYYIETKKNIADVMTKPLPIKTFKLLTNKWIH.

A compositionally biased stretch (low complexity) spans 1–16 (MESQQLSQHSHISHGS). 3 disordered regions span residues 1–93 (MESQ…MMTQ), 126–173 (PQSQ…RPPP), and 352–421 (GSRN…SKST). 2 stretches are compositionally biased toward polar residues: residues 48-60 (TKAN…TPAS) and 127-152 (QSQF…GNTF). Low complexity predominate over residues 153–165 (TDSSSADSDMTST). The interval 299–401 (NNGIHINNKV…NSKSKTARAH (103 aa)) is RNA-binding. Positions 402-418 (NVSTSNNSPSTDNDSIS) are enriched in low complexity. At serine 416 the chain carries Phosphoserine. The For protease activity; shared with dimeric partner role is filled by aspartate 461. The interval 583 to 640 (NVHTSESTRKYPYPFIHRMLAHANAQTIRYSLKNNTITYFNESDVDWSSAIDYQCPDC) is integrase-type zinc finger-like. Residues 660-835 (NSYEPFQYLH…AGLDISTLLP (176 aa)) enclose the Integrase catalytic domain. Mg(2+)-binding residues include aspartate 671 and aspartate 736. 3 disordered regions span residues 956 to 1087 (SKAV…ETEK), 1092 to 1111 (RSPS…NIVP), and 1130 to 1187 (DLPL…DNET). The segment covering 960-969 (SPTDSTPPST) has biased composition (low complexity). The span at 1005–1015 (STPQISNIEST) shows a compositional bias: polar residues. Basic and acidic residues predominate over residues 1038-1053 (ESSHASKSKDFRHSDS). Polar residues-rich tracts occupy residues 1054–1082 (YSEN…QISD) and 1101–1111 (PENNSSHNIVP). Residues 1178-1212 (KKRSLEDNETEIKVSRDTWNTKNMRSLEPPRSKKR) carry the Bipartite nuclear localization signal motif. Residues 1338-1476 (NNYYITQLDI…DILGLEIKYQ (139 aa)) enclose the Reverse transcriptase Ty1/copia-type domain. Mg(2+)-binding residues include aspartate 1346, aspartate 1427, aspartate 1428, aspartate 1610, glutamate 1652, and aspartate 1685. Residues 1610-1752 (DASYGNQPYY…IKTFKLLTNK (143 aa)) enclose the RNase H Ty1/copia-type domain.

As to quaternary structure, the capsid protein forms a homotrimer, from which the VLPs are assembled. The protease is a homodimer, whose active site consists of two apposed aspartic acid residues. Post-translationally, initially, virus-like particles (VLPs) are composed of the structural unprocessed proteins Gag and Gag-Pol, and also contain the host initiator methionine tRNA (tRNA(i)-Met) which serves as a primer for minus-strand DNA synthesis, and a dimer of genomic Ty RNA. Processing of the polyproteins occurs within the particle and proceeds by an ordered pathway, called maturation. First, the protease (PR) is released by autocatalytic cleavage of the Gag-Pol polyprotein yielding capsid protein p45 and a Pol-p154 precursor protein. This cleavage is a prerequisite for subsequent processing of Pol-p154 at the remaining sites to release the mature structural and catalytic proteins. Maturation takes place prior to the RT reaction and is required to produce transposition-competent VLPs.

The protein localises to the cytoplasm. It is found in the nucleus. It catalyses the reaction DNA(n) + a 2'-deoxyribonucleoside 5'-triphosphate = DNA(n+1) + diphosphate. It carries out the reaction Endonucleolytic cleavage to 5'-phosphomonoester.. In terms of biological role, capsid protein (CA) is the structural component of the virus-like particle (VLP), forming the shell that encapsulates the retrotransposons dimeric RNA genome. The particles are assembled from trimer-clustered units and there are holes in the capsid shells that allow for the diffusion of macromolecules. CA also has nucleocapsid-like chaperone activity, promoting primer tRNA(i)-Met annealing to the multipartite primer-binding site (PBS), dimerization of Ty1 RNA and initiation of reverse transcription. Its function is as follows. The aspartyl protease (PR) mediates the proteolytic cleavages of the Gag and Gag-Pol polyproteins after assembly of the VLP. Reverse transcriptase/ribonuclease H (RT) is a multifunctional enzyme that catalyzes the conversion of the retro-elements RNA genome into dsDNA within the VLP. The enzyme displays a DNA polymerase activity that can copy either DNA or RNA templates, and a ribonuclease H (RNase H) activity that cleaves the RNA strand of RNA-DNA heteroduplexes during plus-strand synthesis and hydrolyzes RNA primers. The conversion leads to a linear dsDNA copy of the retrotransposon that includes long terminal repeats (LTRs) at both ends. Functionally, integrase (IN) targets the VLP to the nucleus, where a subparticle preintegration complex (PIC) containing at least integrase and the newly synthesized dsDNA copy of the retrotransposon must transit the nuclear membrane. Once in the nucleus, integrase performs the integration of the dsDNA into the host genome. The protein is Transposon Ty1-GR2 Gag-Pol polyprotein (TY1B-GR2) of Saccharomyces cerevisiae (strain ATCC 204508 / S288c) (Baker's yeast).